The following is a 301-amino-acid chain: Polyamine aminopropyltransferase (301 aa).

Residues 4-240 (WHWLLEWQTP…GLWGFVYGGV (237 aa)) enclose the PABS domain. An S-methyl-5'-thioadenosine-binding site is contributed by Gln33. Positions 64 and 89 each coordinate spermidine. S-methyl-5'-thioadenosine is bound by residues Asp109 and 141–142 (DG). Asp159 (proton acceptor) is an active-site residue.

Belongs to the spermidine/spermine synthase family. As to quaternary structure, homodimer or homotetramer.

It is found in the cytoplasm. The catalysed reaction is S-adenosyl 3-(methylsulfanyl)propylamine + putrescine = S-methyl-5'-thioadenosine + spermidine + H(+). The protein operates within amine and polyamine biosynthesis; spermidine biosynthesis; spermidine from putrescine: step 1/1. In terms of biological role, catalyzes the irreversible transfer of a propylamine group from the amino donor S-adenosylmethioninamine (decarboxy-AdoMet) to putrescine (1,4-diaminobutane) to yield spermidine. The protein is Polyamine aminopropyltransferase of Saccharolobus islandicus (strain Y.N.15.51 / Yellowstone #2) (Sulfolobus islandicus).